A 186-amino-acid chain; its full sequence is Cell division protein SepF (186 aa).

Residues 24–91 (EDEEEEERYA…HNPPHLRAVP (68 aa)) are disordered.

Belongs to the SepF family. As to quaternary structure, homodimer. Interacts with FtsZ.

Its subcellular location is the cytoplasm. Its function is as follows. Cell division protein that is part of the divisome complex and is recruited early to the Z-ring. Probably stimulates Z-ring formation, perhaps through the cross-linking of FtsZ protofilaments. Its function overlaps with FtsA. The polypeptide is Cell division protein SepF (Rubrobacter xylanophilus (strain DSM 9941 / JCM 11954 / NBRC 16129 / PRD-1)).